We begin with the raw amino-acid sequence, 114 residues long: uncharacterized protein (114 aa).

Functionally, may be associated with transposition functions of transposon Tn903. This is an uncharacterized protein from Escherichia coli.